The chain runs to 390 residues: S-adenosylmethionine synthase (390 aa).

Histidine 17 provides a ligand contact to ATP. Aspartate 19 is a Mg(2+) binding site. Glutamate 45 provides a ligand contact to K(+). L-methionine-binding residues include glutamate 58 and glutamine 101. The flexible loop stretch occupies residues 101–111; the sequence is QSPDIGQGVDT. ATP is bound by residues 160 to 162, 226 to 227, aspartate 235, 241 to 242, alanine 258, and lysine 262; these read DGK, RF, and RK. Aspartate 235 serves as a coordination point for L-methionine. Residue lysine 266 participates in L-methionine binding.

It belongs to the AdoMet synthase family. As to quaternary structure, homotetramer; dimer of dimers. Mg(2+) serves as cofactor. The cofactor is K(+).

It localises to the cytoplasm. It catalyses the reaction L-methionine + ATP + H2O = S-adenosyl-L-methionine + phosphate + diphosphate. It functions in the pathway amino-acid biosynthesis; S-adenosyl-L-methionine biosynthesis; S-adenosyl-L-methionine from L-methionine: step 1/1. In terms of biological role, catalyzes the formation of S-adenosylmethionine (AdoMet) from methionine and ATP. The overall synthetic reaction is composed of two sequential steps, AdoMet formation and the subsequent tripolyphosphate hydrolysis which occurs prior to release of AdoMet from the enzyme. In Anaeromyxobacter dehalogenans (strain 2CP-1 / ATCC BAA-258), this protein is S-adenosylmethionine synthase.